Consider the following 266-residue polypeptide: Probable matrix protein (266 aa).

Residues 158–177 are disordered; that stretch reads ACSAGTGGTEEGDSDTEEEP. Acidic residues predominate over residues 167–177; it reads EEGDSDTEEEP.

Its subcellular location is the virion. May play a role in virion budding and release by binding the ribonucleocapsid and the host membrane. The protein is Probable matrix protein of Ixodidae (hardbacked ticks).